The chain runs to 473 residues: Glutamate--tRNA ligase 1 (473 aa).

Residues 10–20 carry the 'HIGH' region motif; sequence PSPTGFLHIGG. The 'KMSKS' region motif lies at 252 to 256; sequence KLSKR. Lysine 255 is an ATP binding site.

This sequence belongs to the class-I aminoacyl-tRNA synthetase family. Glutamate--tRNA ligase type 1 subfamily. In terms of assembly, monomer.

The protein localises to the cytoplasm. It catalyses the reaction tRNA(Glu) + L-glutamate + ATP = L-glutamyl-tRNA(Glu) + AMP + diphosphate. Functionally, catalyzes the attachment of glutamate to tRNA(Glu) in a two-step reaction: glutamate is first activated by ATP to form Glu-AMP and then transferred to the acceptor end of tRNA(Glu). The chain is Glutamate--tRNA ligase 1 from Wolbachia pipientis wMel.